Here is a 487-residue protein sequence, read N- to C-terminus: N-succinylglutamate 5-semialdehyde dehydrogenase (487 aa).

The segment at 1–23 is disordered; it reads MTHFIKGQWQAGKGHDVTSSNPA. 220-225 contributes to the NAD(+) binding site; the sequence is GSSRTG. Residues Glu-243 and Cys-277 contribute to the active site.

It belongs to the aldehyde dehydrogenase family. AstD subfamily.

The catalysed reaction is N-succinyl-L-glutamate 5-semialdehyde + NAD(+) + H2O = N-succinyl-L-glutamate + NADH + 2 H(+). It participates in amino-acid degradation; L-arginine degradation via AST pathway; L-glutamate and succinate from L-arginine: step 4/5. Functionally, catalyzes the NAD-dependent reduction of succinylglutamate semialdehyde into succinylglutamate. The sequence is that of N-succinylglutamate 5-semialdehyde dehydrogenase from Shewanella sp. (strain ANA-3).